The sequence spans 82 residues: Diphthamide biosynthesis protein 3 (82 aa).

In terms of domain architecture, DPH-type MB spans 4–60 (FHDEVEIEDFQYDEDSETYFYPCPCGDNFAITKEDLENGEDVATCPSCSLIIKVIYD). 4 residues coordinate Fe cation: C26, C28, C48, and C51.

The protein belongs to the DPH3 family. In terms of assembly, component of the 2-(3-amino-3-carboxypropyl)histidine synthase complex composed of DPH1, DPH2, DPH3 and a NADH-dependent reductase. Interacts with SERGEF. It depends on Fe(2+) as a cofactor. As to expression, widely expressed with highest levels in heart, liver, kidney and testis.

Its subcellular location is the cytoplasm. The protein localises to the nucleus. The enzyme catalyses [3Fe-4S](1+)-[protein] + Fe(2+)-[Dph3] = [3Fe-4S](0)-[protein] + Fe(3+)-[Dph3]. It catalyses the reaction 2 [3Fe-4S](0)-[protein] + 2 Fe(2+)-[Dph3] + NADH = 2 [4Fe-4S](1+)-[protein] + 2 [Dph3] + NAD(+) + H(+). Its pathway is protein modification; peptidyl-diphthamide biosynthesis. In terms of biological role, required for the first step of diphthamide biosynthesis, a post-translational modification of histidine which occurs in elongation factor 2. DPH1 and DPH2 transfer a 3-amino-3-carboxypropyl (ACP) group from S-adenosyl-L-methionine (SAM) to a histidine residue, the reaction is assisted by a reduction system comprising DPH3 and a NADH-dependent reductase. Acts as an electron donor to reduce the Fe-S cluster in DPH1-DPH2 keeping the [4Fe-4S] clusters in the active and reduced state. Restores iron to DPH1-DPH2 iron-sulfur clusters which have degraded from [4Fe-4S] to [3Fe-4S] by donating an iron atom to reform [4Fe-4S] clusters, in a manner dependent on the presence of elongation factor 2 and SAM. Associates with the elongator complex and is required for tRNA Wobble base modifications mediated by the elongator complex. The elongator complex is required for multiple tRNA modifications, including mcm5U (5-methoxycarbonylmethyl uridine), mcm5s 2U (5-methoxycarbonylmethyl-2-thiouridine), and ncm5U (5-carbamoylmethyl uridine). The chain is Diphthamide biosynthesis protein 3 from Mus musculus (Mouse).